The chain runs to 430 residues: Ribosomal protein uS12 methylthiotransferase RimO (430 aa).

Positions 2–119 constitute an MTTase N-terminal domain; the sequence is ISVYSISLGC…WPAMLAHALK (118 aa). Residues C11, C46, C81, C145, C149, and C152 each contribute to the [4Fe-4S] cluster site. The Radical SAM core domain maps to 131 to 361; sequence STGPSYAWLK…MEVQAEISEE (231 aa). Positions 364 to 430 constitute a TRAM domain; the sequence is AVHEGTRQQV…TRTYDLVALA (67 aa).

This sequence belongs to the methylthiotransferase family. RimO subfamily. [4Fe-4S] cluster serves as cofactor.

Its subcellular location is the cytoplasm. The catalysed reaction is L-aspartate(89)-[ribosomal protein uS12]-hydrogen + (sulfur carrier)-SH + AH2 + 2 S-adenosyl-L-methionine = 3-methylsulfanyl-L-aspartate(89)-[ribosomal protein uS12]-hydrogen + (sulfur carrier)-H + 5'-deoxyadenosine + L-methionine + A + S-adenosyl-L-homocysteine + 2 H(+). Functionally, catalyzes the methylthiolation of an aspartic acid residue of ribosomal protein uS12. The chain is Ribosomal protein uS12 methylthiotransferase RimO from Nitratidesulfovibrio vulgaris (strain ATCC 29579 / DSM 644 / CCUG 34227 / NCIMB 8303 / VKM B-1760 / Hildenborough) (Desulfovibrio vulgaris).